A 619-amino-acid chain; its full sequence is Frizzled and smoothened-like protein L (619 aa).

The N-terminal stretch at 1–24 is a signal peptide; that stretch reads MITNKSKYYFFLILIFINFYLINC. Asparagine 4, asparagine 63, asparagine 112, asparagine 143, asparagine 159, asparagine 184, and asparagine 203 each carry an N-linked (GlcNAc...) asparagine glycan. The Extracellular segment spans residues 25 to 245; it reads QEEYPIDQTG…KQWDRLYDLS (221 aa). The region spanning 31 to 169 is the FZ domain; sequence DQTGKCEPYI…YSIYDLSLVN (139 aa). Cystine bridges form between cysteine 36–cysteine 106 and cysteine 48–cysteine 99. The helical transmembrane segment at 246 to 266 threads the bilayer; that stretch reads NSLSVLSCVGTLFLLFTFNIL. Residues 267–278 are Cytoplasmic-facing; that stretch reads NKKINRFDRMNS. Residues 279–299 form a helical membrane-spanning segment; the sequence is LFNGSVFMMSLSGVIILFAGG. Topologically, residues 300-321 are extracellular; the sequence is PRALIKDGGARISVWQDPLCSA. A helical transmembrane segment spans residues 322–342; that stretch reads TGFIFQLFSIAAILFWVVMSF. Residues 343–358 are Cytoplasmic-facing; it reads ELWYKIKFMTKKLDLK. Residues 359–379 traverse the membrane as a helical segment; that stretch reads KYYIPFIIIVSLVFSIIPLAT. The Extracellular segment spans residues 380-402; sequence KNYRMIRGNMHCWVHTTKLQNSL. A helical membrane pass occupies residues 403-423; that stretch reads FWIPLGIAITIGTIFIGLVMF. At 424–444 the chain is on the cytoplasmic side; that stretch reads EIHRIVSANSKGGVLKLEIKS. The chain crosses the membrane as a helical span at residues 445-465; that stretch reads ILNVALIYLTFIYLFAFNFYM. At 466 to 497 the chain is on the extracellular side; it reads NGQEGVVYGQIESFYQCTLENDASECTIQGPS. Residues 498 to 518 form a helical membrane-spanning segment; the sequence is IGSLGFFIFCIRIYGVYCFIL. Residues 519 to 619 lie on the Cytoplasmic side of the membrane; it reads QGLNYRAYNI…TLKDIEVSKS (101 aa). Residues 581-605 are disordered; sequence LNIDSAFSKNNESDDEDDYDPYKKS.

It belongs to the G-protein coupled receptor Fz/Smo family.

It localises to the membrane. The chain is Frizzled and smoothened-like protein L (fslL) from Dictyostelium discoideum (Social amoeba).